The primary structure comprises 479 residues: Poly(A) polymerase catalytic subunit (479 aa).

Catalysis depends on residues Asp-202 and Asp-204. Ca(2+)-binding residues include Asp-202, Asp-204, and Asp-253.

It belongs to the poxviridae poly(A) polymerase catalytic subunit family. Heterodimer of a large (catalytic) subunit and a small (regulatory) subunit.

It carries out the reaction RNA(n) + ATP = RNA(n)-3'-adenine ribonucleotide + diphosphate. In terms of biological role, polymerase that creates the 3'-poly(A) tail of mRNA's. The polypeptide is Poly(A) polymerase catalytic subunit (OPG063) (Homo sapiens (Human)).